A 173-amino-acid polypeptide reads, in one-letter code: Ribosome maturation factor RimP (173 aa).

It belongs to the RimP family.

Its subcellular location is the cytoplasm. Required for maturation of 30S ribosomal subunits. The protein is Ribosome maturation factor RimP of Chlorobium phaeobacteroides (strain DSM 266 / SMG 266 / 2430).